The chain runs to 161 residues: Protein-export protein SecB (161 aa).

It belongs to the SecB family. In terms of assembly, homotetramer, a dimer of dimers. One homotetramer interacts with 1 SecA dimer.

It localises to the cytoplasm. One of the proteins required for the normal export of preproteins out of the cell cytoplasm. It is a molecular chaperone that binds to a subset of precursor proteins, maintaining them in a translocation-competent state. It also specifically binds to its receptor SecA. The polypeptide is Protein-export protein SecB (Pseudomonas putida (strain ATCC 700007 / DSM 6899 / JCM 31910 / BCRC 17059 / LMG 24140 / F1)).